A 477-amino-acid polypeptide reads, in one-letter code: Mitochondrial adenyl nucleotide antiporter SLC25A24 (477 aa).

The regulatory N-terminal domain stretch occupies residues 1–174; sequence MHQLIRKFVF…RYWKKSTVLD (174 aa). Topologically, residues 1–198 are mitochondrial intermembrane; that stretch reads MHQLIRKFVF…EKTTGMWWKQ (198 aa). In terms of domain architecture, EF-hand 1 spans 20 to 55; that stretch reads DNTKSFAELFEKLDVNKDGKVDVSELKTGLAAMGFS. 19 residues coordinate Ca(2+): Asp-33, Asn-35, Asp-37, Lys-39, Glu-44, Asp-69, Asp-71, Asp-73, Glu-80, Asp-100, Asn-102, Asp-104, Arg-106, Glu-111, Asp-136, Asp-138, Thr-140, Thr-142, and Glu-147. 2 consecutive EF-hand domains span residues 87-122 and 123-158; these read EHEK…LGIN and LSDK…NPAE. Residues 160–169 form a linker region region; that stretch reads LQQIIRYWKK. Residues 175 to 477 form a C-terminal transmembrane transporter domain region; the sequence is IGDSLTIPDE…YMRSGLGISK (303 aa). Solcar repeat units lie at residues 193 to 279, 287 to 372, and 384 to 472; these read GMWW…YKKL, VQSH…LKNT, and PGVL…MRSG. Residues 199 to 216 form a helical membrane-spanning segment; that stretch reads LAAGGVAGAVSRTGTAPL. Residues 217-253 lie on the Mitochondrial matrix side of the membrane; it reads DRMKVFMQVHSSKTNKISLVNGFKQMIKEGGVASLWR. Residues 254–273 traverse the membrane as a helical segment; the sequence is GNGVNVIKIAPETAIKFMAY. Over 274–296 the chain is Mitochondrial intermembrane; it reads EQYKKLLSKDGGKVQSHERFMAG. A helical membrane pass occupies residues 297–310; sequence SLAGATAQTAIYPM. Over 311–346 the chain is Mitochondrial matrix; that stretch reads EVMKTRLTLRKTGQYSGMFDCAKKILRKEGVKAFYK. Residues 347–366 form a helical membrane-spanning segment; that stretch reads GYVPNILGIIPYAGIDLAVY. The Mitochondrial intermembrane portion of the chain corresponds to 367 to 389; the sequence is ETLKNTWLSHYAKDTANPGVLVL. Residues 390-407 traverse the membrane as a helical segment; the sequence is LGCGTISSTCGQLASYPL. Residues 408 to 446 lie on the Mitochondrial matrix side of the membrane; the sequence is ALIRTRMQAMASMEGSEQVSMSKLVKKIMQKEGFFGLYR. A helical transmembrane segment spans residues 447 to 466; sequence GILPNFMKVIPAVSISYVVY. The Mitochondrial intermembrane segment spans residues 467–477; sequence EYMRSGLGISK.

It belongs to the mitochondrial carrier (TC 2.A.29) family. Monomer.

It is found in the mitochondrion inner membrane. It carries out the reaction Mg(2+)(out) + phosphate(in) + ATP(out) = Mg(2+)(in) + phosphate(out) + ATP(in). The catalysed reaction is ADP(out) + phosphate(in) + H(+)(out) = ADP(in) + phosphate(out) + H(+)(in). It catalyses the reaction AMP(out) + phosphate(in) = AMP(in) + phosphate(out). The enzyme catalyses phosphate(in) + ATP(out) + 2 H(+)(out) = phosphate(out) + ATP(in) + 2 H(+)(in). It carries out the reaction dADP(in) + ADP(out) = dADP(out) + ADP(in). The catalysed reaction is Mg(2+)(in) + ADP(out) + ATP(in) + H(+)(out) = Mg(2+)(out) + ADP(in) + ATP(out) + H(+)(in). It catalyses the reaction ADP(out) + diphosphate(in) = ADP(in) + diphosphate(out). The enzyme catalyses dAMP(in) + ADP(out) + H(+)(out) = dAMP(out) + ADP(in) + H(+)(in). It carries out the reaction 3'-AMP(in) + ADP(out) + H(+)(out) = 3'-AMP(out) + ADP(in) + H(+)(in). The catalysed reaction is dAMP(out) + phosphate(in) = dAMP(in) + phosphate(out). It catalyses the reaction 3'-AMP(out) + phosphate(in) = 3'-AMP(in) + phosphate(out). The enzyme catalyses dADP(out) + phosphate(in) + H(+)(out) = dADP(in) + phosphate(out) + H(+)(in). Its activity is regulated as follows. Activated by an increase in cytosolic calcium levels that induce a conformational change of the N-terminal regulatory domain, uncapping the channel and allowing transport. Inhibited by bathophenanthroline, mersalyl, p-hydroxymercuribenzoate, bromcresol purple and tannic acid. Its function is as follows. Electroneutral antiporter that mediates the transport of adenyl nucleotides through the inner mitochondrial membrane. Originally identified as an ATP-magnesium/inorganic phosphate antiporter, it also acts as a broad specificity adenyl nucleotide antiporter. By regulating the mitochondrial matrix adenyl nucleotide pool could adapt to changing cellular energetic demands and indirectly regulate adenyl nucleotide-dependent metabolic pathways. This is Mitochondrial adenyl nucleotide antiporter SLC25A24 (slc25a24) from Danio rerio (Zebrafish).